The primary structure comprises 441 residues: CBL-interacting serine/threonine-protein kinase 3 (441 aa).

The Protein kinase domain maps to 14 to 269 (YEVGRTIGEG…PQEVFEDEWF (256 aa)). Residues 20 to 28 (IGEGTFAKV) and Lys43 each bind ATP. Residue Asp137 is the Proton acceptor of the active site. The activation loop stretch occupies residues 155 to 184 (DFGLSALSQQVRDDGLLHTSCGTPNYVAPE). Residues 307-331 (EQPAAINAFEIISMSRGLNLENLFD) form the NAF domain. The segment at 337–366 (KRETRITLRGGANEIIEKIEEAAKPLGFDV) is PPI.

The protein belongs to the protein kinase superfamily. CAMK Ser/Thr protein kinase family. SNF1 subfamily. As to quaternary structure, interacts with CBL3 and CBL9. Mn(2+) serves as cofactor. As to expression, mostly expressed in germinating seeds and young seedlings. Detected at low levels in roots, stems, leaves and flowers.

The catalysed reaction is L-seryl-[protein] + ATP = O-phospho-L-seryl-[protein] + ADP + H(+). It catalyses the reaction L-threonyl-[protein] + ATP = O-phospho-L-threonyl-[protein] + ADP + H(+). Functionally, involved in the resistance to some abiotic stresses (e.g. high salt, hyperosmotic stress) in young seedlings, by regulating the expression of several stress-inducible genes (cold- and salt-induced genes but not drought-responsive genes). Required for the ABA response during germination. CIPK serine-threonine protein kinases interact with CBL proteins. Binding of a CBL protein to the regulatory NAF domain of CIPK protein lead to the activation of the kinase in a calcium-dependent manner. The CBL9/CIPK3 complex acts in the regulation of abscisic acid response in seed germination. The chain is CBL-interacting serine/threonine-protein kinase 3 (CIPK3) from Arabidopsis thaliana (Mouse-ear cress).